A 620-amino-acid polypeptide reads, in one-letter code: Guanylate-binding protein 3 (620 aa).

Positions M1–C304 are GTPase domain (Globular). One can recognise a GB1/RHD3-type G domain in the interval A29–K271. GTP is bound by residues G39–S46, L61–S63, and D91–L95. Coiled coils occupy residues K375 to L411 and D477 to K582.

Belongs to the TRAFAC class dynamin-like GTPase superfamily. GB1/RHD3 GTPase family. GB1 subfamily. As to quaternary structure, heterodimer with other family members, including GBP1, GBP2 and GBP5. Dimerization regulates subcellular location. Brain, lung, heart, spleen, kidney, liver and intestine.

It is found in the cytoplasm. The protein resides in the perinuclear region. It localises to the golgi apparatus membrane. It catalyses the reaction GTP + H2O = GDP + phosphate + H(+). In terms of biological role, interferon (IFN)-inducible GTPase that plays important roles in innate immunity against a diverse range of bacterial, viral and protozoan pathogens. Hydrolyzes GTP very efficiently; GDP rather than GMP is the major reaction product. Following infection, recruited to the pathogen-containing vacuoles or vacuole-escaped bacteria and acts as a positive regulator of inflammasome assembly by promoting the release of inflammasome ligands from bacteria. Acts by promoting lysis of pathogen-containing vacuoles, releasing pathogens into the cytosol. Following pathogen release in the cytosol, promotes recruitment of proteins that mediate bacterial cytolysis, such as Gm12250/Irgb10: this liberates ligands that are detected by inflammasomes, such as lipopolysaccharide (LPS) that activates the non-canonical CASP4/CASP11 inflammasome or double-stranded DNA (dsDNA) that activates the AIM2 inflammasome. May play a role in erythroid differentiation. The protein is Guanylate-binding protein 3 of Mus musculus (Mouse).